Reading from the N-terminus, the 571-residue chain is Proline--tRNA ligase (571 aa).

Belongs to the class-II aminoacyl-tRNA synthetase family. ProS type 1 subfamily. Homodimer.

It is found in the cytoplasm. The enzyme catalyses tRNA(Pro) + L-proline + ATP = L-prolyl-tRNA(Pro) + AMP + diphosphate. In terms of biological role, catalyzes the attachment of proline to tRNA(Pro) in a two-step reaction: proline is first activated by ATP to form Pro-AMP and then transferred to the acceptor end of tRNA(Pro). As ProRS can inadvertently accommodate and process non-cognate amino acids such as alanine and cysteine, to avoid such errors it has two additional distinct editing activities against alanine. One activity is designated as 'pretransfer' editing and involves the tRNA(Pro)-independent hydrolysis of activated Ala-AMP. The other activity is designated 'posttransfer' editing and involves deacylation of mischarged Ala-tRNA(Pro). The misacylated Cys-tRNA(Pro) is not edited by ProRS. The polypeptide is Proline--tRNA ligase (Pseudomonas putida (strain ATCC 47054 / DSM 6125 / CFBP 8728 / NCIMB 11950 / KT2440)).